Consider the following 92-residue polypeptide: Probable glutathione transferase (92 aa).

In terms of domain architecture, GST N-terminal spans 1 to 71 (RTCPYAQRAR…YLEEAFPDPP (71 aa)). The active-site Nucleophile is the Cys3. Residues Lys30, Val43, and 55–56 (ES) contribute to the glutathione site.

It belongs to the GST superfamily. Omega family.

The catalysed reaction is RX + glutathione = an S-substituted glutathione + a halide anion + H(+). It carries out the reaction L-dehydroascorbate + 2 glutathione = glutathione disulfide + L-ascorbate. The enzyme catalyses methylarsonate + 2 glutathione + H(+) = methylarsonous acid + glutathione disulfide + H2O. In terms of biological role, exhibits glutathione-dependent thiol transferase activity. Has dehydroascorbate reductase activity and may contribute to the recycling of ascorbic acid. Participates in the biotransformation of inorganic arsenic and reduces monomethylarsonic acid (MMA). The protein is Probable glutathione transferase of Aplysia californica (California sea hare).